The sequence spans 278 residues: Putative cysteine-rich repeat secretory protein 19 (278 aa).

An N-terminal signal peptide occupies residues 1 to 32 (MYSSSSVSKRFVLVPIVVVVTTQLLLVRNVSS). Gnk2-homologous domains lie at 39-147 (YLHH…SLDT) and 160-267 (PSAK…LYPF).

This sequence belongs to the cysteine-rich repeat secretory protein family.

Its subcellular location is the secreted. This chain is Putative cysteine-rich repeat secretory protein 19 (CRRSP19), found in Arabidopsis thaliana (Mouse-ear cress).